A 337-amino-acid chain; its full sequence is Protein-methionine-sulfoxide reductase catalytic subunit MsrP (337 aa).

Positions 1 to 50 (MLIKLPSASGSKESDVTPESIYLSRRTLLASSLAGLAVTALPRWASAADA) form a signal peptide, tat-type signal. Residues N94, 97-98 (YE), C152, T187, N237, R242, and 253-255 (SVK) each bind Mo-molybdopterin.

It belongs to the MsrP family. In terms of assembly, heterodimer of a catalytic subunit (MsrP) and a heme-binding subunit (MsrQ). Mo-molybdopterin serves as cofactor. In terms of processing, predicted to be exported by the Tat system. The position of the signal peptide cleavage has not been experimentally proven.

It localises to the periplasm. The catalysed reaction is L-methionyl-[protein] + a quinone + H2O = L-methionyl-(S)-S-oxide-[protein] + a quinol. It carries out the reaction L-methionyl-[protein] + a quinone + H2O = L-methionyl-(R)-S-oxide-[protein] + a quinol. Part of the MsrPQ system that repairs oxidized periplasmic proteins containing methionine sulfoxide residues (Met-O), using respiratory chain electrons. Thus protects these proteins from oxidative-stress damage caused by reactive species of oxygen and chlorine generated by the host defense mechanisms. MsrPQ is essential for the maintenance of envelope integrity under bleach stress, rescuing a wide series of structurally unrelated periplasmic proteins from methionine oxidation. The catalytic subunit MsrP is non-stereospecific, being able to reduce both (R-) and (S-) diastereoisomers of methionine sulfoxide. This Pseudomonas syringae pv. tomato (strain ATCC BAA-871 / DC3000) protein is Protein-methionine-sulfoxide reductase catalytic subunit MsrP.